The chain runs to 286 residues: Probable tRNA(His) guanylyltransferase (286 aa).

Mg(2+) is bound by residues Asp-29, Gly-30, and Asp-76. Residues 29–34 and 75–76 each bind GTP; these read DGKKFH and SD.

Belongs to the tRNA(His) guanylyltransferase family. Mg(2+) serves as cofactor.

The enzyme catalyses a 5'-end ribonucleotide-tRNA(His) + GTP + ATP + H2O = a 5'-end phospho-guanosine-ribonucleotide-tRNA(His) + AMP + 2 diphosphate + H(+). Adds a GMP to the 5'-end of tRNA(His) after transcription and RNase P cleavage. In Drosophila melanogaster (Fruit fly), this protein is Probable tRNA(His) guanylyltransferase.